A 360-amino-acid chain; its full sequence is UDP-arabinopyranose mutase 2 (360 aa).

The residue at position 2 (Val2) is an N-acetylvaline. The DXD motif signature appears at 110–112 (DDD). Arg158 carries an N-linked (Glc...) arginine glycan.

Belongs to the RGP family. In terms of assembly, heteromers with RGP1, RGP4 and RGP5. Mn(2+) is required as a cofactor. It depends on Mg(2+) as a cofactor. Post-translationally, reversibly glycosylated in vitro by UDP-glucose, UDP-xylose and UDP-galactose, but not UDP-mannose. As to expression, predominantly expressed in shoot and root apical meristems. Expressed in epidermal cells of leaves, inflorescence stems and seed coat. Expressed in pollen.

It localises to the cytoplasm. The protein localises to the cytosol. The protein resides in the golgi apparatus. The enzyme catalyses UDP-beta-L-arabinofuranose = UDP-beta-L-arabinopyranose. Functionally, UDP-L-arabinose mutase involved in the biosynthesis of cell wall non-cellulosic polysaccharides. Catalyzes the interconvertion of UDP-L-arabinopyranose (UDP-Arap) and UDP-L-arabinofuranose (UDP-Araf) in vitro. Preferentially catalyzes the formation of UDP-Arap from UDP-Araf. At thermodynamic equilibrium in vitro the ratio of the pyranose form over the furanose form is 95:5. Is not active on other UDP-sugars (UDP-Gal, UDP-Xyl, UDP-Glc, GDP-Man and GDP-Fuc). Functions redundantly with RGP2 and is essential for proper cell walls and pollen development. Probably involved in the formation of the pectocellulosic cell wall layer intine. Is probably active as heteromer in vivo. This Arabidopsis thaliana (Mouse-ear cress) protein is UDP-arabinopyranose mutase 2.